Consider the following 226-residue polypeptide: tRNA (guanine-N(1)-)-methyltransferase (226 aa).

S-adenosyl-L-methionine is bound by residues glycine 112 and isoleucine 132 to leucine 137.

The protein belongs to the RNA methyltransferase TrmD family. As to quaternary structure, homodimer.

Its subcellular location is the cytoplasm. The enzyme catalyses guanosine(37) in tRNA + S-adenosyl-L-methionine = N(1)-methylguanosine(37) in tRNA + S-adenosyl-L-homocysteine + H(+). In terms of biological role, specifically methylates guanosine-37 in various tRNAs. This is tRNA (guanine-N(1)-)-methyltransferase from Christiangramia forsetii (strain DSM 17595 / CGMCC 1.15422 / KT0803) (Gramella forsetii).